Here is a 302-residue protein sequence, read N- to C-terminus: Glutamate/aspartate import solute-binding protein (302 aa).

An N-terminal signal peptide occupies residues 1–22 (MQLRKPATAILALALSAGLAQA).

It belongs to the bacterial solute-binding protein 3 family. As to quaternary structure, the complex is composed of two ATP-binding proteins (GltL), two transmembrane proteins (GltJ and GltK) and a solute-binding protein (GltI).

It is found in the periplasm. Functionally, part of the ABC transporter complex GltIJKL involved in glutamate and aspartate uptake. Binds to both glutamate and aspartate. The protein is Glutamate/aspartate import solute-binding protein (gltI) of Escherichia coli (strain K12).